Reading from the N-terminus, the 258-residue chain is Type III pantothenate kinase (258 aa).

6 to 13 is a binding site for ATP; it reads DVGNTNIV. Substrate-binding positions include Tyr100 and 107–110; that span reads GADR. Asp109 acts as the Proton acceptor in catalysis. Residue Asp129 coordinates K(+). Thr132 is a binding site for ATP. Thr184 is a binding site for substrate.

It belongs to the type III pantothenate kinase family. As to quaternary structure, homodimer. NH4(+) is required as a cofactor. The cofactor is K(+).

It localises to the cytoplasm. It catalyses the reaction (R)-pantothenate + ATP = (R)-4'-phosphopantothenate + ADP + H(+). It functions in the pathway cofactor biosynthesis; coenzyme A biosynthesis; CoA from (R)-pantothenate: step 1/5. Catalyzes the phosphorylation of pantothenate (Pan), the first step in CoA biosynthesis. This chain is Type III pantothenate kinase, found in Clostridium botulinum (strain Kyoto / Type A2).